A 766-amino-acid polypeptide reads, in one-letter code: Cytoplasmic polyadenylation element-binding protein 3 (766 aa).

Disordered stretches follow at residues 1 to 35 (MSQE…TSET), 131 to 179 (VPSR…ARRL), and 216 to 299 (PVPI…LPPR). Polar residues-rich tracts occupy residues 233–256 (ETPT…SDYQ) and 276–289 (STPN…NRDN). The region spanning 310-332 (IFVGGVPWDITEAALKDSFGEFG) is the RRM domain. Residues 578-602 (KAFSGPNRRSHLSSNSPSKPASLMS) form a disordered region. Over residues 589-602 (LSSNSPSKPASLMS) the composition is skewed to low complexity.

Its function is as follows. Cytoplasmic polyadenylation element binding protein that binds to and regulates the translation of specific mRNAs. This is Cytoplasmic polyadenylation element-binding protein 3 (cpb-3) from Caenorhabditis remanei (Caenorhabditis vulgaris).